We begin with the raw amino-acid sequence, 114 residues long: Fluoride-specific ion channel FluC 2 (114 aa).

3 consecutive transmembrane segments (helical) span residues 30–50, 57–77, and 88–108; these read FPVATFLVNVAGCLILGLLSG, TFALLGTGFCGGLTTYSTFAV, and ALPSVVYVVASVAAGLAAAWL. 2 residues coordinate Na(+): glycine 67 and threonine 70.

This sequence belongs to the fluoride channel Fluc/FEX (TC 1.A.43) family.

The protein resides in the cell membrane. It catalyses the reaction fluoride(in) = fluoride(out). Na(+) is not transported, but it plays an essential structural role and its presence is essential for fluoride channel function. Fluoride-specific ion channel. Important for reducing fluoride concentration in the cell, thus reducing its toxicity. The chain is Fluoride-specific ion channel FluC 2 from Rhodococcus jostii (strain RHA1).